Here is a 721-residue protein sequence, read N- to C-terminus: 1,4-alpha-glucan branching enzyme GlgB (721 aa).

The active-site Nucleophile is the Asp-400. Glu-453 serves as the catalytic Proton donor.

Belongs to the glycosyl hydrolase 13 family. GlgB subfamily. In terms of assembly, monomer.

It carries out the reaction Transfers a segment of a (1-&gt;4)-alpha-D-glucan chain to a primary hydroxy group in a similar glucan chain.. It participates in glycan biosynthesis; glycogen biosynthesis. Catalyzes the formation of the alpha-1,6-glucosidic linkages in glycogen by scission of a 1,4-alpha-linked oligosaccharide from growing alpha-1,4-glucan chains and the subsequent attachment of the oligosaccharide to the alpha-1,6 position. The sequence is that of 1,4-alpha-glucan branching enzyme GlgB from Chlamydia felis (strain Fe/C-56) (Chlamydophila felis).